The primary structure comprises 235 residues: Aspartate/glutamate leucyltransferase (235 aa).

It belongs to the R-transferase family. Bpt subfamily.

It is found in the cytoplasm. It catalyses the reaction N-terminal L-glutamyl-[protein] + L-leucyl-tRNA(Leu) = N-terminal L-leucyl-L-glutamyl-[protein] + tRNA(Leu) + H(+). The catalysed reaction is N-terminal L-aspartyl-[protein] + L-leucyl-tRNA(Leu) = N-terminal L-leucyl-L-aspartyl-[protein] + tRNA(Leu) + H(+). Functions in the N-end rule pathway of protein degradation where it conjugates Leu from its aminoacyl-tRNA to the N-termini of proteins containing an N-terminal aspartate or glutamate. This is Aspartate/glutamate leucyltransferase from Pseudomonas putida (strain GB-1).